Here is a 397-residue protein sequence, read N- to C-terminus: MERFKKASSIIEMLKQHGHEAYFVGGSVRDLIIDRPIGDIDIATSALPEEVMAIFPRHVPVGLEHGTVIVVENGEPYEVTTFRTESEYEDFRRPSSVQFVRSLEEDLKRRDFTMNAIAMTEEGEMVDLFAGKEAIRLKEITTVGDAADRFQEDALRMMRGIRFVSTLGFSLEIKTKQAIETYGHLLEHIAIERITVEFEKLLTGTYCVNGLQELVETKLFSHLPYLQMSEERLLKATQYKWDSFETDVEAWAFFLYCIGEEHPSVFLRQWKFSNKKIKDIVAVLLAIRSRKEKEWDTILLYKTGIRIAEMAERVYEAIIESYNSASVKQVQSLFHALPIKNRQEMNVTGNDLLSWTDKKPGPWVAEMLQNIEEAIVQGDLVNKKEDIREWLQRCNLL.

Residues glycine 26 and arginine 29 each coordinate ATP. The CTP site is built by glycine 26 and arginine 29. The Mg(2+) site is built by aspartate 39 and aspartate 41. ATP-binding residues include arginine 110, aspartate 153, arginine 156, arginine 159, and arginine 162. Positions 110, 153, 156, 159, and 162 each coordinate CTP.

Belongs to the tRNA nucleotidyltransferase/poly(A) polymerase family. Bacterial CCA-adding enzyme type 3 subfamily. In terms of assembly, homodimer. Requires Mg(2+) as cofactor.

The catalysed reaction is a tRNA precursor + 2 CTP + ATP = a tRNA with a 3' CCA end + 3 diphosphate. It carries out the reaction a tRNA with a 3' CCA end + 2 CTP + ATP = a tRNA with a 3' CCACCA end + 3 diphosphate. In terms of biological role, catalyzes the addition and repair of the essential 3'-terminal CCA sequence in tRNAs without using a nucleic acid template. Adds these three nucleotides in the order of C, C, and A to the tRNA nucleotide-73, using CTP and ATP as substrates and producing inorganic pyrophosphate. tRNA 3'-terminal CCA addition is required both for tRNA processing and repair. Also involved in tRNA surveillance by mediating tandem CCA addition to generate a CCACCA at the 3' terminus of unstable tRNAs. While stable tRNAs receive only 3'-terminal CCA, unstable tRNAs are marked with CCACCA and rapidly degraded. In Bacillus mycoides (strain KBAB4) (Bacillus weihenstephanensis), this protein is CCA-adding enzyme.